The sequence spans 132 residues: Translation initiation factor 5A (132 aa).

Hypusine is present on Lys-37.

The protein belongs to the eIF-5A family.

The protein localises to the cytoplasm. In terms of biological role, functions by promoting the formation of the first peptide bond. The sequence is that of Translation initiation factor 5A (eif5a) from Methanocaldococcus jannaschii (strain ATCC 43067 / DSM 2661 / JAL-1 / JCM 10045 / NBRC 100440) (Methanococcus jannaschii).